The following is a 227-amino-acid chain: Gamma-glutamyl-hercynylcysteine sulfoxide hydrolase (227 aa).

Catalysis depends on Cys-2, which acts as the Nucleophile. Positions 2 to 227 constitute a Glutamine amidotransferase type-2 domain; that stretch reads CRHVAWLGAP…RDAHVVVTPL (226 aa).

The enzyme catalyses gamma-L-glutamyl-hercynylcysteine S-oxide + H2O = S-(hercyn-2-yl)-L-cysteine S-oxide + L-glutamate. Its pathway is amino-acid biosynthesis; ergothioneine biosynthesis. In terms of biological role, catalyzes the hydrolysis of the gamma-glutamyl amide bond of hercynyl-gamma-L-glutamyl-L-cysteine sulfoxide to produce hercynylcysteine sulfoxide, a step in the biosynthesis pathway of ergothioneine. This is Gamma-glutamyl-hercynylcysteine sulfoxide hydrolase from Mycolicibacterium smegmatis (strain ATCC 700084 / mc(2)155) (Mycobacterium smegmatis).